The sequence spans 187 residues: UPF0301 protein Clim_0777 (187 aa).

The protein belongs to the UPF0301 (AlgH) family.

This is UPF0301 protein Clim_0777 from Chlorobium limicola (strain DSM 245 / NBRC 103803 / 6330).